The primary structure comprises 60 residues: Metallothionein A (60 aa).

The tract at residues 1–28 (MDPCECSKTGKCNCGTSCTCTNCSCKCC) is beta. A divalent metal cation-binding residues include Cys4, Cys6, Cys12, Cys14, Cys18, Cys20, Cys23, Cys25, Cys28, Cys32, Cys33, Cys35, Cys36, Cys40, Cys43, Cys47, Cys49, Cys54, Cys58, and Cys59. The segment at 29 to 60 (KKSCCSCCPSGCSKCASGCVCKGNSCDKSCCQ) is alpha.

This sequence belongs to the metallothionein superfamily. Type 1 family.

Functionally, metallothioneins have a high content of cysteine residues that bind various heavy metals. The chain is Metallothionein A (mta) from Cyprinodon sp. (Pupfish).